The following is a 122-amino-acid chain: Small ribosomal subunit protein uS13 (122 aa).

The disordered stretch occupies residues 99–122; sequence RGQRTHTNARTRKGPAKAIAGKKK.

This sequence belongs to the universal ribosomal protein uS13 family. In terms of assembly, part of the 30S ribosomal subunit. Forms a loose heterodimer with protein S19. Forms two bridges to the 50S subunit in the 70S ribosome.

Located at the top of the head of the 30S subunit, it contacts several helices of the 16S rRNA. In the 70S ribosome it contacts the 23S rRNA (bridge B1a) and protein L5 of the 50S subunit (bridge B1b), connecting the 2 subunits; these bridges are implicated in subunit movement. Contacts the tRNAs in the A and P-sites. This is Small ribosomal subunit protein uS13 from Rhodopseudomonas palustris (strain BisB5).